The chain runs to 950 residues: Translation initiation factor IF-2 (950 aa).

Disordered regions lie at residues 57-254 (LAER…AVVI) and 304-328 (DVSR…KSLS). Composition is skewed to low complexity over residues 101-131 (AEPQ…EPAA) and 139-169 (AAPL…QPAA). The span at 170–215 (PAAPPAPTAQPSAPPPAAAQPRPPQPSAPSRPPPPGYRPAPPPGAR) shows a compositional bias: pro residues. A compositionally biased stretch (low complexity) spans 216 to 233 (PPVSAAPGAPGQPGAAGQ). A tr-type G domain is found at 449–618 (IRPPVVTVMG…ALQSEVLELK (170 aa)). The tract at residues 458–465 (GHVDHGKT) is G1. 458–465 (GHVDHGKT) contributes to the GTP binding site. Residues 483–487 (GITQH) are G2. Residues 504–507 (DTPG) are G3. GTP contacts are provided by residues 504–508 (DTPGH) and 558–561 (NKVD). The tract at residues 558 to 561 (NKVD) is G4. The tract at residues 594–596 (SAR) is G5.

It belongs to the TRAFAC class translation factor GTPase superfamily. Classic translation factor GTPase family. IF-2 subfamily.

Its subcellular location is the cytoplasm. Functionally, one of the essential components for the initiation of protein synthesis. Protects formylmethionyl-tRNA from spontaneous hydrolysis and promotes its binding to the 30S ribosomal subunits. Also involved in the hydrolysis of GTP during the formation of the 70S ribosomal complex. This chain is Translation initiation factor IF-2, found in Anaeromyxobacter dehalogenans (strain 2CP-C).